The chain runs to 129 residues: Succinate dehydrogenase assembly factor 3, mitochondrial (129 aa).

Residues 1-21 constitute a mitochondrion transit peptide; sequence MQVNHLLRQAVKQTTRAGRLG.

This sequence belongs to the complex I LYR family. SDHAF3 subfamily. In terms of assembly, interacts with the iron-sulfur protein subunit within the SDH catalytic dimer.

It localises to the mitochondrion matrix. Plays an essential role in the assembly of succinate dehydrogenase (SDH), an enzyme complex (also referred to as respiratory complex II) that is a component of both the tricarboxylic acid (TCA) cycle and the mitochondrial electron transport chain, and which couples the oxidation of succinate to fumarate with the reduction of ubiquinone (coenzyme Q) to ubiquinol. Promotes maturation of the iron-sulfur protein subunit of the SDH catalytic dimer, protecting it from the deleterious effects of oxidants. May act together with SDHAF1. In Kluyveromyces lactis (strain ATCC 8585 / CBS 2359 / DSM 70799 / NBRC 1267 / NRRL Y-1140 / WM37) (Yeast), this protein is Succinate dehydrogenase assembly factor 3, mitochondrial.